Here is a 321-residue protein sequence, read N- to C-terminus: MSILVIGATGTLGRQIVRSALDEGYQVRCLVRNLRKAAFLKEWGAKLIWGDLSQPESLLPALTGIRVIIDTSTSRPTDPAGVYQVDLKGKKALIDAAKAMKIEKFIFFSILNSEKYSQVPLMRIKTVTEELLKESGLNYTIFKLCGFFQGLIGQYAVPILDQQTVWITTESTSIAYMDTIDIARFTLRSLVLKETNNRVFPLVGTRSWNSADIIQLCERLSGQNAKVTRVPIAFLELARNTSCFFEWGWNIADRLAFTEVLSKSQFFNSSMDEVYKIFKIESTSTTILESYLQEYFSRILKRLKEINSQQSQKKKTSDLFV.

Belongs to the NmrA-type oxidoreductase family. Ycf39 subfamily.

The protein resides in the plastid. It localises to the cyanelle. Involved in assembly of photosystem II. The chain is Photosystem II assembly factor Ycf39 (ycf39) from Cyanophora paradoxa.